A 395-amino-acid polypeptide reads, in one-letter code: Ribosomal RNA small subunit methyltransferase H (395 aa).

S-adenosyl-L-methionine contacts are provided by residues 101–103, Asp-120, Tyr-147, Asp-171, and Gln-178; that span reads GGH.

Belongs to the methyltransferase superfamily. RsmH family.

It is found in the cytoplasm. The enzyme catalyses cytidine(1402) in 16S rRNA + S-adenosyl-L-methionine = N(4)-methylcytidine(1402) in 16S rRNA + S-adenosyl-L-homocysteine + H(+). Its function is as follows. Specifically methylates the N4 position of cytidine in position 1402 (C1402) of 16S rRNA. This chain is Ribosomal RNA small subunit methyltransferase H, found in Mycobacterium marinum (strain ATCC BAA-535 / M).